The following is a 303-amino-acid chain: Protoheme IX farnesyltransferase (303 aa).

The next 8 helical transmembrane spans lie at 25-45, 54-74, 104-124, 125-145, 151-171, 179-199, 228-248, and 280-300; these read MGLV…AIVL, IPQI…ACAL, LLIL…ILNI, PSGV…SIWS, WNTV…WTAI, AIAL…ALAI, VWLI…PVFI, and FVYS…ISLI.

Belongs to the UbiA prenyltransferase family. Protoheme IX farnesyltransferase subfamily. Interacts with CtaA.

It is found in the cell membrane. It carries out the reaction heme b + (2E,6E)-farnesyl diphosphate + H2O = Fe(II)-heme o + diphosphate. It functions in the pathway porphyrin-containing compound metabolism; heme O biosynthesis; heme O from protoheme: step 1/1. Functionally, converts heme B (protoheme IX) to heme O by substitution of the vinyl group on carbon 2 of heme B porphyrin ring with a hydroxyethyl farnesyl side group. This is Protoheme IX farnesyltransferase from Staphylococcus carnosus (strain TM300).